The primary structure comprises 71 residues: Large ribosomal subunit protein uL30 (71 aa).

It belongs to the universal ribosomal protein uL30 family. In terms of assembly, part of the 50S ribosomal subunit.

This Mycobacterium leprae (strain TN) protein is Large ribosomal subunit protein uL30.